Here is a 101-residue protein sequence, read N- to C-terminus: MTETGGQPPVSFPVKDVAGLLFLLRRLTRRGRNAACGQCPASGRARDGRFYRSRLASVTVYASPSPFSDERPSSRFRGIFSPSKRRRLRYSTVGLTRYRTR.

This is an uncharacterized protein from Escherichia coli O157:H7.